A 213-amino-acid polypeptide reads, in one-letter code: ATP phosphoribosyltransferase (213 aa).

Belongs to the ATP phosphoribosyltransferase family. Short subfamily. In terms of assembly, heteromultimer composed of HisG and HisZ subunits.

The protein resides in the cytoplasm. The enzyme catalyses 1-(5-phospho-beta-D-ribosyl)-ATP + diphosphate = 5-phospho-alpha-D-ribose 1-diphosphate + ATP. It functions in the pathway amino-acid biosynthesis; L-histidine biosynthesis; L-histidine from 5-phospho-alpha-D-ribose 1-diphosphate: step 1/9. In terms of biological role, catalyzes the condensation of ATP and 5-phosphoribose 1-diphosphate to form N'-(5'-phosphoribosyl)-ATP (PR-ATP). Has a crucial role in the pathway because the rate of histidine biosynthesis seems to be controlled primarily by regulation of HisG enzymatic activity. The protein is ATP phosphoribosyltransferase of Methylococcus capsulatus (strain ATCC 33009 / NCIMB 11132 / Bath).